The primary structure comprises 709 residues: Rho guanine nucleotide exchange factor 16 (709 aa).

Position 2 is an N-acetylalanine (Ala2). A phosphoserine mark is found at Ser6, Ser41, and Ser107. The disordered stretch occupies residues 22-70 (ELRLDAGGNPASGLPMVRGSPRVRDDAAFQPQVPAPPQPRPPGHEEPWP). Residues 114–146 (SREAARRDPKLLPAPSFSLDDMDVDKDPGGMLR) are disordered. Residues Ser174, Ser191, and Ser208 each carry the phosphoserine modification. Positions 180-246 (LAEEPSQPHT…ESSSPEGTQK (67 aa)) are disordered. Over residues 191–207 (SPAKNKKTLGRKRGHKG) the composition is skewed to basic residues. Thr226 bears the Phosphothreonine mark. 3 positions are modified to phosphoserine: Ser227, Ser230, and Ser240. The tract at residues 275 to 481 (LDQLSTEERK…MERMEQMYTL (207 aa)) is required for RHOG activation and mediates interaction with EPHA2. The DH domain maps to 284 to 468 (KRQEAMFEIL…SKLVRQCNEG (185 aa)). A PH domain is found at 501 to 620 (WLLKRGELFL…WIVALTHSER (120 aa)). Positions 629–689 (GDLPQVEITK…PEDFARFITS (61 aa)) constitute an SH3 domain. The PDZ-binding motif signature appears at 707–709 (TDV).

Interacts with ELMO2, EPHA2, RAC1 and RHOG; mediates activation of RAC1 by EPHA2. Interacts with TAX1BP3 (via PDZ domain). May interact with CDC42; stimulated by HPV16 E6.

The protein resides in the cytoplasm. Guanyl-nucleotide exchange factor of the RHOG GTPase stimulating the exchange of RHOG-associated GDP for GTP. May play a role in chemotactic cell migration by mediating the activation of RAC1 by EPHA2. May also activate CDC42 and mediate activation of CDC42 by the viral protein HPV16 E6. The protein is Rho guanine nucleotide exchange factor 16 (ARHGEF16) of Homo sapiens (Human).